Consider the following 134-residue polypeptide: MSDKASTPKKSATKDATKPKKVGDEEAKKREVKKNFDSYALYISRVLKSVFPDIGITLPSISVMDSFVRDIFERIAMDASSLTRNYQKSTLTTKEIETATKLILKGDLNKHAVSEGQSAVKRAQGQPTSGSKSR.

Residues 1 to 10 (MSDKASTPKK) show a composition bias toward polar residues. Disordered stretches follow at residues 1-29 (MSDK…EAKK) and 113-134 (VSEG…SKSR). The span at 12–29 (ATKDATKPKKVGDEEAKK) shows a compositional bias: basic and acidic residues. Positions 125 to 134 (GQPTSGSKSR) are enriched in polar residues.

This sequence belongs to the histone H2B family. In terms of assembly, the nucleosome is a histone octamer containing two molecules each of H2A, H2B, H3 and H4 assembled in one H3-H4 heterotetramer and two H2A-H2B heterodimers. The octamer wraps approximately 147 bp of DNA.

The protein resides in the nucleus. It is found in the chromosome. In terms of biological role, core component of nucleosome. Nucleosomes wrap and compact DNA into chromatin, limiting DNA accessibility to the cellular machineries which require DNA as a template. Histones thereby play a central role in transcription regulation, DNA repair, DNA replication and chromosomal stability. DNA accessibility is regulated via a complex set of post-translational modifications of histones, also called histone code, and nucleosome remodeling. In Entamoeba invadens, this protein is Histone H2B.